Consider the following 231-residue polypeptide: Putative carboxymethylenebutenolidase (231 aa).

Residues Cys-118, Asp-167, and His-199 contribute to the active site.

Belongs to the dienelactone hydrolase family.

The catalysed reaction is 2-(5-oxo-2,5-dihydrofuran-2-ylidene)acetate + H2O = 4-oxohex-2-enedioate + H(+). This Aquifex aeolicus (strain VF5) protein is Putative carboxymethylenebutenolidase.